Here is a 226-residue protein sequence, read N- to C-terminus: MITSVYAKIEYVTNTKMLFVANNWGYWVNVKPNSGFSRTDNNVLVFLHELTFLAQNNAINKELYAFKSLKEKEWFKALLTINGIGPKTAMNVMVNKQEEVLTLIKNNDLNGLLRLENINKKVATMLLASDIASKHYLKNQIVVSDKVEPQIDDDEKIDDSKDLNDDELLSEIVIEAIDCLISLGYKQEQIKTALAEIDLKNESINDSADLVAVIIKQIGLRTSEVS.

The interval 1–67 is domain I; it reads MITSVYAKIE…AINKELYAFK (67 aa). The interval 68 to 145 is domain II; it reads SLKEKEWFKA…YLKNQIVVSD (78 aa). Positions 146–167 are flexible linker; the sequence is KVEPQIDDDEKIDDSKDLNDDE. The segment at 168–226 is domain III; that stretch reads LLSEIVIEAIDCLISLGYKQEQIKTALAEIDLKNESINDSADLVAVIIKQIGLRTSEVS.

This sequence belongs to the RuvA family. Homotetramer. Forms an RuvA(8)-RuvB(12)-Holliday junction (HJ) complex. HJ DNA is sandwiched between 2 RuvA tetramers; dsDNA enters through RuvA and exits via RuvB. An RuvB hexamer assembles on each DNA strand where it exits the tetramer. Each RuvB hexamer is contacted by two RuvA subunits (via domain III) on 2 adjacent RuvB subunits; this complex drives branch migration. In the full resolvosome a probable DNA-RuvA(4)-RuvB(12)-RuvC(2) complex forms which resolves the HJ.

It localises to the cytoplasm. Functionally, the RuvA-RuvB-RuvC complex processes Holliday junction (HJ) DNA during genetic recombination and DNA repair, while the RuvA-RuvB complex plays an important role in the rescue of blocked DNA replication forks via replication fork reversal (RFR). RuvA specifically binds to HJ cruciform DNA, conferring on it an open structure. The RuvB hexamer acts as an ATP-dependent pump, pulling dsDNA into and through the RuvAB complex. HJ branch migration allows RuvC to scan DNA until it finds its consensus sequence, where it cleaves and resolves the cruciform DNA. The chain is Holliday junction branch migration complex subunit RuvA from Mycoplasmoides gallisepticum (strain R(low / passage 15 / clone 2)) (Mycoplasma gallisepticum).